The chain runs to 245 residues: Ribonuclease 3 (245 aa).

Residues alanine 19–glycine 144 enclose the RNase III domain. Glutamate 57 contributes to the Mg(2+) binding site. The active site involves aspartate 61. Mg(2+) contacts are provided by aspartate 130 and glutamate 133. Glutamate 133 is an active-site residue. The 70-residue stretch at aspartate 169–valine 238 folds into the DRBM domain.

This sequence belongs to the ribonuclease III family. As to quaternary structure, homodimer. Mg(2+) serves as cofactor.

Its subcellular location is the cytoplasm. It catalyses the reaction Endonucleolytic cleavage to 5'-phosphomonoester.. Functionally, digests double-stranded RNA. Involved in the processing of primary rRNA transcript to yield the immediate precursors to the large and small rRNAs (23S and 16S). Processes some mRNAs, and tRNAs when they are encoded in the rRNA operon. Processes pre-crRNA and tracrRNA of type II CRISPR loci if present in the organism. In Brucella abortus (strain S19), this protein is Ribonuclease 3.